The sequence spans 72 residues: Large ribosomal subunit protein bL31c (72 aa).

It belongs to the bacterial ribosomal protein bL31 family. Type A subfamily. As to quaternary structure, part of the 50S ribosomal subunit.

The protein resides in the plastid. It is found in the chloroplast. In terms of biological role, binds the 23S rRNA. The chain is Large ribosomal subunit protein bL31c (rpl31) from Phaeodactylum tricornutum (strain CCAP 1055/1).